The sequence spans 184 residues: Large ribosomal subunit protein uL5 (184 aa).

The protein belongs to the universal ribosomal protein uL5 family. In terms of assembly, part of the 50S ribosomal subunit; part of the 5S rRNA/L5/L18/L25 subcomplex. Contacts the 5S rRNA and the P site tRNA. Forms a bridge to the 30S subunit in the 70S ribosome.

Its function is as follows. This is one of the proteins that bind and probably mediate the attachment of the 5S RNA into the large ribosomal subunit, where it forms part of the central protuberance. In the 70S ribosome it contacts protein S13 of the 30S subunit (bridge B1b), connecting the 2 subunits; this bridge is implicated in subunit movement. Contacts the P site tRNA; the 5S rRNA and some of its associated proteins might help stabilize positioning of ribosome-bound tRNAs. The protein is Large ribosomal subunit protein uL5 of Syntrophotalea carbinolica (strain DSM 2380 / NBRC 103641 / GraBd1) (Pelobacter carbinolicus).